The following is a 1082-amino-acid chain: Error-prone DNA polymerase (1082 aa).

Belongs to the DNA polymerase type-C family. DnaE2 subfamily.

The protein resides in the cytoplasm. It catalyses the reaction DNA(n) + a 2'-deoxyribonucleoside 5'-triphosphate = DNA(n+1) + diphosphate. In terms of biological role, DNA polymerase involved in damage-induced mutagenesis and translesion synthesis (TLS). It is not the major replicative DNA polymerase. The sequence is that of Error-prone DNA polymerase from Xanthomonas campestris pv. campestris (strain 8004).